Reading from the N-terminus, the 192-residue chain is NADH:FMN oxidoreductase (192 aa).

Residues methionine 1–alanine 20 are disordered. Residues threonine 60–serine 63, asparagine 77–serine 84, alanine 111, and arginine 117 contribute to the FMN site.

It belongs to the non-flavoprotein flavin reductase family.

The protein localises to the cytoplasm. The enzyme catalyses FMNH2 + NAD(+) = FMN + NADH + 2 H(+). It functions in the pathway sulfur metabolism; dibenzothiophene degradation. An NADH:FMN oxidoreductase which supplies reduced FMN for the '4S' desulfurization pathway that removes covalently bound sulfur from dibenzothiophene (DBT) without breaking carbon-carbon bonds. Provides DszA and DszC (DBTO2-monooxygenase and DBT-monooxygenase respectively) with reduced flavin (FMN). The protein is NADH:FMN oxidoreductase of Rhodococcus erythropolis (Arthrobacter picolinophilus).